A 145-amino-acid chain; its full sequence is MRLLVLAALLTVGAGQAGLNSRALWQFNGMIKCKIPSSEPLLDFNNYGCYCGLGGSGTPVDDLDRCCQTHDNCYKQAKKLDSCKVLVDNPYTNNYSYSCSNNEITCSSENNACEAFICNCDRNAAICFSKVPYNKEHKNLDKKNC.

The N-terminal stretch at 1–15 (MRLLVLAALLTVGAG) is a signal peptide. Residue Gln16 is modified to Pyrrolidone carboxylic acid. A propeptide spans 16 to 22 (QAGLNSR) (removed by trypsin). Disulfide bonds link Cys33/Cys99, Cys49/Cys145, Cys51/Cys67, Cys66/Cys127, Cys73/Cys120, Cys83/Cys113, and Cys106/Cys118. 3 residues coordinate Ca(2+): Tyr50, Gly52, and Gly54. His70 is an active-site residue. Asp71 lines the Ca(2+) pocket. Asp121 is a catalytic residue.

This sequence belongs to the phospholipase A2 family. As to quaternary structure, monomer or homodimer. Ca(2+) is required as a cofactor. Post-translationally, activated by trypsin cleavage in the duodenum. Can also be activated by thrombin or autocatalytically.

The protein localises to the secreted. It catalyses the reaction a 1,2-diacyl-sn-glycero-3-phosphocholine + H2O = a 1-acyl-sn-glycero-3-phosphocholine + a fatty acid + H(+). The catalysed reaction is 1,2-ditetradecanoyl-sn-glycero-3-phosphocholine + H2O = 1-tetradecanoyl-sn-glycero-3-phosphocholine + tetradecanoate + H(+). The enzyme catalyses 1,2-dihexadecanoyl-sn-glycero-3-phosphocholine + H2O = 1-hexadecanoyl-sn-glycero-3-phosphocholine + hexadecanoate + H(+). It carries out the reaction 1-hexadecanoyl-2-(9Z-octadecenoyl)-sn-glycero-3-phosphocholine + H2O = 1-hexadecanoyl-sn-glycero-3-phosphocholine + (9Z)-octadecenoate + H(+). It catalyses the reaction 1-hexadecanoyl-2-(5Z,8Z,11Z,14Z-eicosatetraenoyl)-sn-glycero-3-phosphocholine + H2O = 1-hexadecanoyl-sn-glycero-3-phosphocholine + (5Z,8Z,11Z,14Z)-eicosatetraenoate + H(+). The catalysed reaction is 1-hexadecanoyl-2-(9Z-octadecenoyl)-sn-glycero-3-phospho-(1'-sn-glycerol) + H2O = 1-hexadecanoyl-sn-glycero-3-phospho-(1'-sn-glycerol) + (9Z)-octadecenoate + H(+). The enzyme catalyses N-hexadecanoyl-1,2-di-(9Z-octadecenoyl)-sn-glycero-3-phosphoethanolamine + H2O = N-hexadecanoyl-1-(9Z-octadecenoyl)-sn-glycero-3-phosphoethanolamine + (9Z)-octadecenoate + H(+). It carries out the reaction 1-hexadecanoyl-2-(9Z,12Z-octadecadienoyl)-sn-glycero-3-phosphoethanolamine + H2O = 1-hexadecanoyl-sn-glycero-3-phosphoethanolamine + (9Z,12Z)-octadecadienoate + H(+). It catalyses the reaction N,1-dihexadecanoyl-2-(9Z,12Z-octadecadienoyl)-sn-glycero-3-phosphoethanolamine + H2O = N,1-dihexadecanoyl-sn-glycero-3-phosphoethanolamine + (9Z,12Z)-octadecadienoate + H(+). Functionally, secretory calcium-dependent phospholipase A2 that primarily targets dietary phospholipids in the intestinal tract. Hydrolyzes the ester bond of the fatty acyl group attached at sn-2 position of phospholipids (phospholipase A2 activity) with preference for phosphatidylethanolamines and phosphatidylglycerols over phosphatidylcholines. May play a role in the biosynthesis of N-acyl ethanolamines that regulate energy metabolism and inflammation in the intestinal tract. Hydrolyzes N-acyl phosphatidylethanolamines to N-acyl lysophosphatidylethanolamines, which are further cleaved by a lysophospholipase D to release N-acyl ethanolamines. May act in an autocrine and paracrine manner. Has anti-helminth activity in a process regulated by gut microbiota. Upon helminth infection of intestinal epithelia, directly affects phosphatidylethanolamine contents in the membrane of helminth larvae, likely controlling an array of phospholipid-mediated cellular processes such as membrane fusion and cell division while providing for better immune recognition, ultimately reducing larvae integrity and infectivity. The sequence is that of Phospholipase A2 (PLA2G1B) from Bos taurus (Bovine).